The chain runs to 91 residues: Large ribosomal subunit protein bL27 (91 aa).

Belongs to the bacterial ribosomal protein bL27 family. In terms of assembly, part of the 50S ribosomal subunit. Contacts protein L18.

Functionally, binds the 5S and 23S rRNAs and also the tRNA in the P site. The chain is Large ribosomal subunit protein bL27 (rpmA) from Deinococcus radiodurans (strain ATCC 13939 / DSM 20539 / JCM 16871 / CCUG 27074 / LMG 4051 / NBRC 15346 / NCIMB 9279 / VKM B-1422 / R1).